The following is a 357-amino-acid chain: Neurogenic differentiation factor 1 (357 aa).

The disordered stretch occupies residues 1–94; it reads MTKSYSESGL…GPKKKKMTKA (94 aa). Residues 58–78 are compositionally biased toward acidic residues; that stretch reads EEEEEDEDLEEEEEEEEEEED. Over residues 81–93 the composition is skewed to basic residues; sequence PKRRGPKKKKMTK. Residues 87–93 carry the Nuclear localization signal motif; it reads KKKKMTK. Residues 101–153 form the bHLH domain; the sequence is LRRMKANARERNRMHGLNAALDNLRKVVPCYSKTQKLSKIETLRLAKNYIWAL. Residues S162, S259, S266, and S274 each carry the phosphoserine modification. S336 is subject to Phosphoserine; by CaMK2.

In terms of assembly, efficient DNA-binding requires dimerization with another bHLH protein. Heterodimer with TCF3/E47; the heterodimer is inhibited in presence of ID2, but not NR0B2, to E-box element. Interacts with EP300; the interaction is inhibited by NR0B2. Interacts with RREB1. Interacts with ATOH8. Post-translationally, in islet cells, phosphorylated on Ser-274 upon glucose stimulation; which may be required for nuclear localization. In activated neurons, phosphorylated on Ser-336; which promotes dendritic growth. Phosphorylated by MAPK1; phosphorylation regulates heterodimerization and DNA-binding activities. Phosphorylation on Ser-266 and Ser-274 increases transactivation on the insulin promoter in glucose-stimulated insulinoma cells. As to expression, expressed in pancreatic beta cells, pulmonary neuroendocrine cells and retinal interneurons amacrine cells (at protein level). Expressed in endocrine cells of the pancreas. Expressed in the inner layer of cerebellar external granular layer (EGL). Expressed in the Ammon's horn (AH), which includes the CA1-CA3 pyramidal layer and in granule cells of the dentate gyrus (DG). Expressed in photoreceptors of the outer nuclear layer (ONL), in a subset of cells in the lower half of the inner nuclear layer (INL), and in a subset of cells in the ganglion cell layer (GCL) of the retina. Expressed in cholinergic and AII amacrine cell types. Expressed in differentiating neurons of both the central and peripheral nervous systems.

Its subcellular location is the cytoplasm. It localises to the nucleus. Functionally, acts as a transcriptional activator: mediates transcriptional activation by binding to E box-containing promoter consensus core sequences 5'-CANNTG-3'. Associates with the p300/CBP transcription coactivator complex to stimulate transcription of the secretin gene as well as the gene encoding the cyclin-dependent kinase inhibitor CDKN1A. Contributes to the regulation of several cell differentiation pathways, like those that promote the formation of early retinal ganglion cells, inner ear sensory neurons, granule cells forming either the cerebellum or the dentate gyrus cell layer of the hippocampus, endocrine islet cells of the pancreas and enteroendocrine cells of the small intestine. Together with PAX6 or SIX3, is required for the regulation of amacrine cell fate specification. Also required for dendrite morphogenesis and maintenance in the cerebellar cortex. Associates with chromatin to enhancer regulatory elements in genes encoding key transcriptional regulators of neurogenesis. The chain is Neurogenic differentiation factor 1 (Neurod1) from Mus musculus (Mouse).